Consider the following 506-residue polypeptide: Putative transporter SVOPL (506 aa).

10 consecutive transmembrane segments (helical) span residues 57 to 77 (SIGFGCFHILLFVIMGSANIV), 104 to 124 (ALVSTMVFFGFMVCGVLCGYI), 133 to 153 (VVFGGFVWASYFSFLTSFSTS), 190 to 210 (LLPLASIFWMMGSILIIVLGM), 220 to 240 (WMIRFSVIPSLVLIGLFMFIP), 297 to 317 (TSLLLWYSWFVASFSYYGSVL), 362 to 382 (LISCLGEVALIPLNIILLNIV), 397 to 417 (FFFMLVNICTTMLGFTILLFL), 444 to 464 (IGMGFCTSFSRIGGMIAPFIA), and 472 to 492 (VILALSPFATACIICAIGVFF).

It belongs to the major facilitator superfamily.

Its subcellular location is the membrane. This chain is Putative transporter SVOPL (svopl), found in Danio rerio (Zebrafish).